A 196-amino-acid chain; its full sequence is Calcium channel flower (196 aa).

The next 3 membrane-spanning stretches (helical) occupy residues 35–55 (LGIVAAFFAILFGLWNVLSII), 70–92 (LAGFVVMALEAPCCFVCIEQVGS), and 113–133 (AVPPIFMCFGLASLFGSGLIF).

It belongs to the calcium channel flower family. In terms of assembly, homomultimer. Associates with the dally/ magu complex.

Its subcellular location is the cell membrane. It localises to the cytoplasmic vesicle. The protein resides in the secretory vesicle. The protein localises to the synaptic vesicle membrane. It is found in the presynaptic cell membrane. Its subcellular location is the endosome. Channel activity is inhibited by La(3+), which reduces Ca(2+) influx and thus inhibits it's function in promoting activity-dependent bulk endocytosis (ADBE) in response to high stimuli. Functionally, transmembrane protein which mediates synaptic endocytosis, fitness-based cell culling, neuronal culling, morphogen gradient scaling, and calcium transport. Regulates synaptic endocytosis and hence couples exo- with endocytosis. Controls two major modes of synaptic vesicle (SV) endocytosis in the synaptic boutons of neuromuscular junctions (NMJs); Ca(2+) channel-independent Clathrin-mediated endocytosis (CME) in response to mild stimulation, and Ca(2+) channel-dependent activity-dependent bulk endocytosis (ADBE) in response to strong stimulation. Functions in ADBE and subsequent SV reformation from bulk endosomes by initiating Ca(2+) channel-dependent phosphatidylinositol 4,5-bisphosphate (PtdIns(4,5)P2) compartmentalization in synaptic boutons. There it acts at the periactive zone to provide the low Ca(2+) levels required to initiate Calcineurin activation and upregulate PtdIns(4,5)P2. Conversely PtdIns(4,5)P2 enhances fwe Ca(2+) channel-activity, establishing a positive feedback loop that induces PtdIns(4,5)P2 microdomain at the periactive zone. These microdomains trigger bulk membrane invagination (i.e. ADBE) by triggering actin polymerization while also promoting localization of fwe to bulk endosomes, thereby removing the ADBE trigger to reduce endocytosis and prevent excess membrane uptake. PtdIns(4,5)P2 then promotes SV reformation from the bulk endosomes, to coordinate ADBE and subsequent SV reformation. Different combinations of the flower isoforms at the cell membrane are also required for the identification and elimination of suboptimal or supernumerary cells during development, regeneration, and adulthood. Required for the recognition and elimination of unfit cells in the developing wing during cell competition. In the developing pupal retina, mediates the elimination of unwanted postmitotic neurons, including supernumerary photoreceptor neurons that form at the periphery of the retina and are contained within incomplete ommatidia units. Also required for efficient elimination and replacement of old neurons by newly generated neurons during regeneration in the adult brain following mechanical injury. Downstream of the flower fitness fingerprints, cells identified as unwanted or unfit are eliminated via apoptosis through the expression of ahuizotl (azot). However, the cells marked for elimination by the flower isoforms only undergo apoptosis if additional thresholds are met; (1) their neighboring fit/healthy cells express different levels of the fwe isoforms, and (2) the levels of the protective signal SPARC expressed by the loser or unwanted cells are unable to inhibit caspase activation. These additional thresholds for flower-mediated apoptosis, allows useful cells to recover from transient and limited stress before they are unnecessarily eliminated. Functions with dally and magu in a mechanism of scaling, which utilises apoptosis to ensure that the dpp morphogen gradient, which mediates organ growth, remains proportional to the size of the growing wing. In this mechanism, fwe represses dally- and Magu-dependent activity in expanding the gradient, and dally/Magu inhibits fwe-dependent apoptosis to keep cell death rate low. When the levels of these different proteins are optimally regulated the gradient correctly scales with organ growth but when this fails, fwe-mediated apoptosis is activated to trim the developing tissue to match the correct size of the gradient. The polypeptide is Calcium channel flower (Drosophila grimshawi (Hawaiian fruit fly)).